A 468-amino-acid polypeptide reads, in one-letter code: Cysteine--tRNA ligase (468 aa).

Residue C33 coordinates Zn(2+). The 'HIGH' region signature appears at 35–45; sequence ATVQGLPHIGH. Positions 211, 236, and 240 each coordinate Zn(2+). Positions 267-271 match the 'KMSKS' region motif; that stretch reads KMSKS. ATP is bound at residue K270.

It belongs to the class-I aminoacyl-tRNA synthetase family. Monomer. It depends on Zn(2+) as a cofactor.

The protein resides in the cytoplasm. It catalyses the reaction tRNA(Cys) + L-cysteine + ATP = L-cysteinyl-tRNA(Cys) + AMP + diphosphate. In Mycobacterium marinum (strain ATCC BAA-535 / M), this protein is Cysteine--tRNA ligase.